The primary structure comprises 554 residues: Glutamine--tRNA ligase (554 aa).

The short motif at Pro-34–His-44 is the 'HIGH' region element. ATP-binding positions include Glu-35–Asn-37 and His-41–Ser-47. Residues Asp-67 and Tyr-212 each coordinate L-glutamine. Residues Thr-231, Arg-261–Leu-262, and Met-269–Lys-271 contribute to the ATP site. The short motif at Val-268–Arg-272 is the 'KMSKS' region element. The interval Thr-317–Glu-324 is interaction with tRNA.

It belongs to the class-I aminoacyl-tRNA synthetase family. As to quaternary structure, monomer.

It localises to the cytoplasm. The enzyme catalyses tRNA(Gln) + L-glutamine + ATP = L-glutaminyl-tRNA(Gln) + AMP + diphosphate. The polypeptide is Glutamine--tRNA ligase (Shigella flexneri serotype 5b (strain 8401)).